Consider the following 382-residue polypeptide: Flap endonuclease 1 (382 aa).

The segment at 1-105 (MGIKGLNAII…HELTKRSSRR (105 aa)) is N-domain. D34 is a binding site for Mg(2+). Positions 47 and 71 each coordinate DNA. Mg(2+)-binding residues include D87, E156, E158, D177, and D179. The segment at 120–251 (EKMKQERRLV…VTALKLIKTH (132 aa)) is I-domain. E156 is a DNA binding site. Positions 229 and 231 each coordinate DNA. A Mg(2+)-binding site is contributed by D231. Residues 339 to 347 (IQGRLDGFF) form an interaction with PCNA region. A disordered region spans residues 358–382 (AAAAKRAQENKKLNKNKNKVTKGRR). Basic residues predominate over residues 370-382 (LNKNKNKVTKGRR).

The protein belongs to the XPG/RAD2 endonuclease family. FEN1 subfamily. Interacts with PCNA. Three molecules of RAD27 bind to one PCNA trimer with each molecule binding to one PCNA monomer. PCNA stimulates the nuclease activity without altering cleavage specificity. Mg(2+) serves as cofactor. Post-translationally, phosphorylated. Phosphorylation upon DNA damage induces relocalization to the nuclear plasma.

The protein localises to the nucleus. It is found in the nucleolus. It localises to the nucleoplasm. Its subcellular location is the mitochondrion. Structure-specific nuclease with 5'-flap endonuclease and 5'-3' exonuclease activities involved in DNA replication and repair. During DNA replication, cleaves the 5'-overhanging flap structure that is generated by displacement synthesis when DNA polymerase encounters the 5'-end of a downstream Okazaki fragment. It enters the flap from the 5'-end and then tracks to cleave the flap base, leaving a nick for ligation. Also involved in the long patch base excision repair (LP-BER) pathway, by cleaving within the apurinic/apyrimidinic (AP) site-terminated flap. Acts as a genome stabilization factor that prevents flaps from equilibrating into structures that lead to duplications and deletions. Also possesses 5'-3' exonuclease activity on nicked or gapped double-stranded DNA, and exhibits RNase H activity. Also involved in replication and repair of rDNA and in repairing mitochondrial DNA. This Saccharomyces cerevisiae (strain RM11-1a) (Baker's yeast) protein is Flap endonuclease 1.